The primary structure comprises 569 residues: Proline--tRNA ligase (569 aa).

The protein belongs to the class-II aminoacyl-tRNA synthetase family. ProS type 1 subfamily. As to quaternary structure, homodimer.

The protein localises to the cytoplasm. It catalyses the reaction tRNA(Pro) + L-proline + ATP = L-prolyl-tRNA(Pro) + AMP + diphosphate. Functionally, catalyzes the attachment of proline to tRNA(Pro) in a two-step reaction: proline is first activated by ATP to form Pro-AMP and then transferred to the acceptor end of tRNA(Pro). As ProRS can inadvertently accommodate and process non-cognate amino acids such as alanine and cysteine, to avoid such errors it has two additional distinct editing activities against alanine. One activity is designated as 'pretransfer' editing and involves the tRNA(Pro)-independent hydrolysis of activated Ala-AMP. The other activity is designated 'posttransfer' editing and involves deacylation of mischarged Ala-tRNA(Pro). The misacylated Cys-tRNA(Pro) is not edited by ProRS. In Campylobacter jejuni subsp. jejuni serotype O:23/36 (strain 81-176), this protein is Proline--tRNA ligase.